We begin with the raw amino-acid sequence, 424 residues long: Histidine--tRNA ligase (424 aa).

Belongs to the class-II aminoacyl-tRNA synthetase family. In terms of assembly, homodimer.

The protein localises to the cytoplasm. The catalysed reaction is tRNA(His) + L-histidine + ATP = L-histidyl-tRNA(His) + AMP + diphosphate + H(+). This is Histidine--tRNA ligase (hisS) from Bacillus subtilis (strain 168).